The sequence spans 348 residues: MNGTEGPNFYVPFSNATGVVRSPFEYPQYYLAEPWQFSMLAAYMFLLIVLGFPINFLTLYVTVQHKKLRTPLNYILLNLAVADLFMVFGGFTTTLYTSLHGYFVFGPTGCNLEGFFATLGGEIALWSLVVLAIERYVVICKPMSNFRFGENHAIMGVVFTWIMALACAAPPLVGWSRYIPEGMQCSCGVDYYTLKPEVNNESFVIYMFVVHFTIPLIVIFFCYGQLVFTVKEAAAQQQESATTQKAEKEVTRMVILMVVFFLICWFPYAGVAFYIFTHQGSNFGPIFMTLPAFFAKSSSIYNPVIYIMMNKQFRNCMLTTLCCGKNILGDDEASATASKTETSQVAPA.

M1 is subject to N-acetylmethionine. Topologically, residues 1-36 (MNGTEGPNFYVPFSNATGVVRSPFEYPQYYLAEPWQ) are extracellular. N2 and N15 each carry an N-linked (GlcNAc...) asparagine glycan. Residues 37-61 (FSMLAAYMFLLIVLGFPINFLTLYV) traverse the membrane as a helical segment. Residues 62–73 (TVQHKKLRTPLN) are Cytoplasmic-facing. The helical transmembrane segment at 74–96 (YILLNLAVADLFMVFGGFTTTLY) threads the bilayer. Over 97-110 (TSLHGYFVFGPTGC) the chain is Extracellular. Cysteines 110 and 187 form a disulfide. The helical transmembrane segment at 111–133 (NLEGFFATLGGEIALWSLVVLAI) threads the bilayer. The short motif at 134-136 (ERY) is the 'Ionic lock' involved in activated form stabilization element. The Cytoplasmic segment spans residues 134 to 152 (ERYVVICKPMSNFRFGENH). A helical transmembrane segment spans residues 153–173 (AIMGVVFTWIMALACAAPPLV). At 174–202 (GWSRYIPEGMQCSCGVDYYTLKPEVNNES) the chain is on the extracellular side. E201 provides a ligand contact to Zn(2+). Residues 203–224 (FVIYMFVVHFTIPLIVIFFCYG) traverse the membrane as a helical segment. At 225–252 (QLVFTVKEAAAQQQESATTQKAEKEVTR) the chain is on the cytoplasmic side. Residues 253-274 (MVILMVVFFLICWFPYAGVAFY) form a helical membrane-spanning segment. Topologically, residues 275–286 (IFTHQGSNFGPI) are extracellular. Q279 contributes to the Zn(2+) binding site. The helical transmembrane segment at 287-308 (FMTLPAFFAKSSSIYNPVIYIM) threads the bilayer. K296 is modified (N6-(retinylidene)lysine). Topologically, residues 309-348 (MNKQFRNCMLTTLCCGKNILGDDEASATASKTETSQVAPA) are cytoplasmic. 2 S-palmitoyl cysteine lipidation sites follow: C322 and C323. The tract at residues 330-348 (DDEASATASKTETSQVAPA) is interaction with SAG. Phosphoserine is present on S334. The residue at position 336 (T336) is a Phosphothreonine. The residue at position 338 (S338) is a Phosphoserine. T340 and T342 each carry phosphothreonine. S343 is subject to Phosphoserine.

The protein belongs to the G-protein coupled receptor 1 family. Opsin subfamily. Homodimer. May form a complex composed of RHO, GRK1 and RCVRN in a Ca(2+)-dependent manner; RCVRN prevents the interaction between GRK1 and RHO. Interacts with GRK1. Interacts (phosphorylated form) with SAG. Interacts with GNAT1. Interacts with GNAT3. SAG and G-proteins compete for a common binding site. Interacts with PRCD; the interaction promotes PRCD stability. Forms a complex with ASAP1 and ARF4. Forms a complex with ASAP1, RAB11A, Rabin8/RAB3IP, ARF4 and RAB11FIP3; the complex regulates Golgi-to-cilia rhodopsin/RHO transport in photoreceptors. In terms of processing, phosphorylated on some or all of the serine and threonine residues present in the C-terminal region. Post-translationally, contains one covalently linked retinal chromophore. Upon light absorption, the covalently bound 11-cis-retinal is converted to all-trans-retinal. After hydrolysis of the Schiff base and release of the covalently bound all-trans-retinal, active rhodopsin is regenerated by binding of a fresh molecule of 11-cis-retinal.

It is found in the membrane. The protein localises to the cell projection. It localises to the cilium. Its subcellular location is the photoreceptor outer segment. In terms of biological role, photoreceptor required for image-forming vision at low light intensity. Required for photoreceptor cell viability after birth. Light-induced isomerization of 11-cis to all-trans retinal triggers a conformational change that activates signaling via G-proteins. Subsequent receptor phosphorylation mediates displacement of the bound G-protein alpha subunit by the arrestin SAG and terminates signaling. This is Rhodopsin (RHO) from Cricetulus griseus (Chinese hamster).